Consider the following 434-residue polypeptide: Alpha-enolase (434 aa).

Ser-40 is a Mg(2+) binding site. The substrate site is built by His-158 and Glu-167. Glu-210 serves as the catalytic Proton donor. Mg(2+) contacts are provided by Asp-245, Glu-293, and Asp-318. Substrate contacts are provided by Glu-293 and Asp-318. Catalysis depends on Lys-343, which acts as the Proton acceptor. Substrate is bound by residues 370–373 (SHRS) and Lys-394.

The protein belongs to the enolase family. Homodimer. Mg(2+) is required as a cofactor.

It localises to the cytoplasm. It catalyses the reaction (2R)-2-phosphoglycerate = phosphoenolpyruvate + H2O. It functions in the pathway carbohydrate degradation; glycolysis; pyruvate from D-glyceraldehyde 3-phosphate: step 4/5. In Gallus gallus (Chicken), this protein is Alpha-enolase (ENO1).